A 431-amino-acid chain; its full sequence is Serine/threonine-protein kinase PknA (431 aa).

Residues 1 to 339 are Cytoplasmic-facing; the sequence is MSPRVGVTLS…RRTFSSGQRA (339 aa). The Protein kinase domain maps to 13–272; that stretch reads YRLQRLIATG…SGGPFADAVA (260 aa). ATP is bound by residues 19 to 27 and lysine 42; that span reads IATGGMGQV. The active-site Proton acceptor is the aspartate 141. Residues 276 to 333 are disordered; it reads AGRRPPRPSQTPPPGRAAPAAIPSGTTARVAANSAGRTAASRRSRPATGGHRPPRRTF. The segment covering 282 to 291 has biased composition (pro residues); it reads RPSQTPPPGR. Positions 292-314 are enriched in low complexity; the sequence is AAPAAIPSGTTARVAANSAGRTA. A helical membrane pass occupies residues 340 to 360; it reads LLWAAGVLGALAIIIAVLLVI. At 361-431 the chain is on the extracellular side; it reads KAPGDNSPQQ…ASLARYEIAQ (71 aa). A disordered region spans residues 366 to 418; it reads NSPQQAPTPTVTTTGNPPASNTGGTDASPRLNWTERGETRHSGLQSWVVPPTP. The segment covering 368 to 384 has biased composition (low complexity); that stretch reads PQQAPTPTVTTTGNPPA.

Belongs to the protein kinase superfamily. Ser/Thr protein kinase family. Post-translationally, autophosphorylated.

The protein resides in the cell membrane. It catalyses the reaction L-seryl-[protein] + ATP = O-phospho-L-seryl-[protein] + ADP + H(+). It carries out the reaction L-threonyl-[protein] + ATP = O-phospho-L-threonyl-[protein] + ADP + H(+). Its function is as follows. Protein kinase that regulates many aspects of mycobacterial physiology. Is a key component of a signal transduction pathway that regulates cell growth, cell shape and cell division via phosphorylation of target proteins. The protein is Serine/threonine-protein kinase PknA (pknA) of Mycobacterium bovis (strain ATCC BAA-935 / AF2122/97).